The sequence spans 554 residues: Germacrene A synthase (554 aa).

Mg(2+) is bound by residues aspartate 306, aspartate 310, threonine 453, and glutamate 457. The DDXXD motif motif lies at aspartate 306–aspartate 310.

It belongs to the terpene synthase family. Requires Mg(2+) as cofactor.

The protein resides in the cytoplasm. The protein localises to the cytosol. The catalysed reaction is (2E,6E)-farnesyl diphosphate = (+)-(R)-germacrene A + diphosphate. It participates in secondary metabolite biosynthesis; terpenoid biosynthesis. In terms of biological role, sesquiterpene synthase involved in germacrene A biosynthesis. Also produces additional sesquiterpene products, including 4,5-di-epi-aristolochene, eremophilene, alpha-selinene. This is Germacrene A synthase from Pogostemon cablin (Patchouli).